Here is a 162-residue protein sequence, read N- to C-terminus: Phosphopantetheine adenylyltransferase (162 aa).

Residue S11 coordinates substrate. ATP is bound by residues 11 to 12 (SF) and H19. Residues K43, V76, and R90 each contribute to the substrate site. ATP is bound by residues 91–93 (GLR), E101, and 126–132 (HLYISSS).

The protein belongs to the bacterial CoaD family. In terms of assembly, homohexamer. The cofactor is Mg(2+).

It localises to the cytoplasm. It carries out the reaction (R)-4'-phosphopantetheine + ATP + H(+) = 3'-dephospho-CoA + diphosphate. It participates in cofactor biosynthesis; coenzyme A biosynthesis; CoA from (R)-pantothenate: step 4/5. Functionally, reversibly transfers an adenylyl group from ATP to 4'-phosphopantetheine, yielding dephospho-CoA (dPCoA) and pyrophosphate. The sequence is that of Phosphopantetheine adenylyltransferase from Streptococcus pneumoniae (strain Hungary19A-6).